A 63-amino-acid polypeptide reads, in one-letter code: Large ribosomal subunit protein uL29 (63 aa).

This sequence belongs to the universal ribosomal protein uL29 family.

The protein is Large ribosomal subunit protein uL29 of Proteus mirabilis (strain HI4320).